Consider the following 614-residue polypeptide: DNA mismatch repair protein MutL (614 aa).

The interval Pro-355–Leu-411 is disordered. Low complexity predominate over residues Ser-382–Gly-401.

The protein belongs to the DNA mismatch repair MutL/HexB family.

In terms of biological role, this protein is involved in the repair of mismatches in DNA. It is required for dam-dependent methyl-directed DNA mismatch repair. May act as a 'molecular matchmaker', a protein that promotes the formation of a stable complex between two or more DNA-binding proteins in an ATP-dependent manner without itself being part of a final effector complex. This chain is DNA mismatch repair protein MutL, found in Shewanella woodyi (strain ATCC 51908 / MS32).